The primary structure comprises 267 residues: Transmembrane protein 106B (267 aa).

Residues 1-92 are Cytoplasmic-facing; that stretch reads MGKALSHVAK…QRLRPRRTKL (92 aa). The helical transmembrane segment at 93-113 threads the bilayer; that stretch reads YVMASVILCLLLCTLAVFFLF. Residues 114-267 are Lumenal-facing; it reads PRSIDVNYVG…EYSLNTPLTG (154 aa). N141, N147, N160, and N179 each carry an N-linked (GlcNAc...) asparagine glycan. A disulfide bond links C210 and C249. An N-linked (GlcNAc...) asparagine glycan is attached at N252.

Belongs to the TMEM106 family.

It is found in the late endosome membrane. Its subcellular location is the lysosome membrane. The protein resides in the cell membrane. Functionally, in neurons, involved in the transport of late endosomes/lysosomes. May be involved in dendrite morphogenesis and maintenance by regulating lysosomal trafficking. May act as a molecular brake for retrograde transport of late endosomes/lysosomes, possibly via its interaction with MAP6. In motoneurons, may mediate the axonal transport of lysosomes and axonal sorting at the initial segment. It remains unclear whether TMEM106B affects the transport of moving lysosomes in the anterograde or retrograde direction in neurites and whether it is particularly important in the sorting of lysosomes in axons or in dendrites. In neurons, may also play a role in the regulation of lysosomal size and responsiveness to stress. Required for proper lysosomal acidification. In Danio rerio (Zebrafish), this protein is Transmembrane protein 106B (tmem106b).